The sequence spans 439 residues: Ribosomal protein uS12 methylthiotransferase RimO (439 aa).

Residues 7–119 (KQLCLISLGC…IDILIAKKQN (113 aa)) enclose the MTTase N-terminal domain. 6 residues coordinate [4Fe-4S] cluster: Cys-16, Cys-50, Cys-82, Cys-151, Cys-155, and Cys-158. Residues 137 to 368 (TGSSVHAYVK…ALKHQNHSFK (232 aa)) enclose the Radical SAM core domain.

This sequence belongs to the methylthiotransferase family. RimO subfamily. [4Fe-4S] cluster is required as a cofactor.

Its subcellular location is the cytoplasm. It catalyses the reaction L-aspartate(89)-[ribosomal protein uS12]-hydrogen + (sulfur carrier)-SH + AH2 + 2 S-adenosyl-L-methionine = 3-methylsulfanyl-L-aspartate(89)-[ribosomal protein uS12]-hydrogen + (sulfur carrier)-H + 5'-deoxyadenosine + L-methionine + A + S-adenosyl-L-homocysteine + 2 H(+). Catalyzes the methylthiolation of an aspartic acid residue of ribosomal protein uS12. In Helicobacter pylori (strain J99 / ATCC 700824) (Campylobacter pylori J99), this protein is Ribosomal protein uS12 methylthiotransferase RimO.